The primary structure comprises 117 residues: Large ribosomal subunit protein uL18 (117 aa).

This sequence belongs to the universal ribosomal protein uL18 family. As to quaternary structure, part of the 50S ribosomal subunit; part of the 5S rRNA/L5/L18/L25 subcomplex. Contacts the 5S and 23S rRNAs.

In terms of biological role, this is one of the proteins that bind and probably mediate the attachment of the 5S RNA into the large ribosomal subunit, where it forms part of the central protuberance. The sequence is that of Large ribosomal subunit protein uL18 from Phytoplasma mali (strain AT).